The primary structure comprises 710 residues: Adenylosuccinate synthetase (710 aa).

Disordered regions lie at residues 1–53 (MPVR…PQEA) and 84–110 (DEPP…SGRS). 2 stretches are compositionally biased toward polar residues: residues 10 to 27 (YNNS…STTA) and 101 to 110 (ANASNSSGRS). GTP is bound by residues 180–186 (GDEGKGK) and 210–212 (GHT). D181 functions as the Proton acceptor in the catalytic mechanism. Residues D181 and G210 each contribute to the Mg(2+) site. Residues 181–184 (DEGK), 208–211 (NAGH), T295, K309, Q421, T437, and K567 each bind IMP. The active-site Proton donor is H211. A substrate-binding site is contributed by 563–569 (AVTKKPR). GTP is bound by residues R569 and 697 to 699 (GNG).

Belongs to the adenylosuccinate synthetase family. Homodimer. It depends on Mg(2+) as a cofactor.

It localises to the cytoplasm. It catalyses the reaction IMP + L-aspartate + GTP = N(6)-(1,2-dicarboxyethyl)-AMP + GDP + phosphate + 2 H(+). It participates in purine metabolism; AMP biosynthesis via de novo pathway; AMP from IMP: step 1/2. Functionally, plays an important role in the salvage pathway for purine nucleotide biosynthesis. Catalyzes the first committed step in the biosynthesis of AMP from IMP. The protein is Adenylosuccinate synthetase (ADSS) of Leishmania donovani.